The primary structure comprises 357 residues: Protein FAM118A (357 aa).

An N-acetylmethionine modification is found at M1. Residues 30–50 (LLLVIGTGVSAAVAPGIPALC) form a helical membrane-spanning segment. S311 bears the Phosphoserine mark.

This sequence belongs to the FAM118 family.

The protein resides in the membrane. The polypeptide is Protein FAM118A (FAM118A) (Homo sapiens (Human)).